Reading from the N-terminus, the 556-residue chain is WD repeat-containing protein srw1 (556 aa).

The disordered stretch occupies residues 1-80 (MDEFDGFTRP…NEGDRFIPSR (80 aa)). Low complexity predominate over residues 12–37 (SSNSSANRNSNNSMNRVENNNSNSDS). The span at 43–55 (SRGDAHTRMRQGF) shows a compositional bias: basic and acidic residues. Ser-62 carries the phosphoserine modification. The span at 69–78 (RTNEGDRFIP) shows a compositional bias: basic and acidic residues. Thr-98 bears the Phosphothreonine mark. The segment covering 126 to 146 (TFNNSPIATPNTTIGVSTPRT) has biased composition (polar residues). Residues 126 to 173 (TFNNSPIATPNTTIGVSTPRTDSGIDDIELTQRTPPSSSHTSSSILQN) form a disordered region. Low complexity predominate over residues 159–169 (TPPSSSHTSSS). A Phosphothreonine modification is found at Thr-177. Ser-187 and Ser-214 each carry phosphoserine. WD repeat units lie at residues 246 to 285 (GLAG…VTVM), 289 to 328 (YPTD…KTRT), 331 to 368 (GHTE…HYFR), 372 to 411 (AHRQ…PLYS), 414 to 456 (NHIA…MLHN), 458 to 499 (DTGS…RVGT), and 502 to 541 (GHTD…SKHS).

It belongs to the WD repeat CDC20/Fizzy family. Post-translationally, phosphorylated by cdc2-cdc13-CDK complex. This targets srw1 for proteolysis which in turn promotes cdc13 turnover. Dephosphorylated during G1 arrest.

It localises to the nucleus. Functionally, has a role in cell differentiation and cell cycling by negatively regulating cig2 and cdc12-associated cdc2. Down-regulates the level of cdc13, particularly in a nitrogen deprived environment. Regulator of cell cycle G1 phase progression. Prevents onset of mitosis during the pre-Start G1 period. Required for degradation of cdc13 mitotic cyclin B during G1 arrest but not during mitotic exit. This chain is WD repeat-containing protein srw1 (srw1), found in Schizosaccharomyces pombe (strain 972 / ATCC 24843) (Fission yeast).